The sequence spans 170 residues: ATP synthase subunit b (170 aa).

A helical transmembrane segment spans residues 22–41 (VLNWAVVVFGLYKFLPGFLG).

The protein belongs to the ATPase B chain family. As to quaternary structure, F-type ATPases have 2 components, F(1) - the catalytic core - and F(0) - the membrane proton channel. F(1) has five subunits: alpha(3), beta(3), gamma(1), delta(1), epsilon(1). F(0) has four main subunits: a(1), b(1), b'(1) and c(10-14). The alpha and beta chains form an alternating ring which encloses part of the gamma chain. F(1) is attached to F(0) by a central stalk formed by the gamma and epsilon chains, while a peripheral stalk is formed by the delta, b and b' chains.

The protein resides in the cellular thylakoid membrane. F(1)F(0) ATP synthase produces ATP from ADP in the presence of a proton or sodium gradient. F-type ATPases consist of two structural domains, F(1) containing the extramembraneous catalytic core and F(0) containing the membrane proton channel, linked together by a central stalk and a peripheral stalk. During catalysis, ATP synthesis in the catalytic domain of F(1) is coupled via a rotary mechanism of the central stalk subunits to proton translocation. Its function is as follows. Component of the F(0) channel, it forms part of the peripheral stalk, linking F(1) to F(0). This Prochlorococcus marinus subsp. pastoris (strain CCMP1986 / NIES-2087 / MED4) protein is ATP synthase subunit b.